Reading from the N-terminus, the 253-residue chain is Electron transfer flavoprotein subunit beta, mitochondrial (253 aa).

This sequence belongs to the ETF beta-subunit/FixA family. In terms of assembly, heterodimer of an alpha and a beta subunit. Requires FAD as cofactor. AMP is required as a cofactor.

The protein localises to the mitochondrion matrix. In terms of biological role, the electron transfer flavoprotein serves as a specific electron acceptor for several dehydrogenases, including five acyl-CoA dehydrogenases, glutaryl-CoA and sarcosine dehydrogenase. It transfers the electrons to the main mitochondrial respiratory chain via ETF-ubiquinone oxidoreductase (ETF dehydrogenase). In Oryza sativa subsp. japonica (Rice), this protein is Electron transfer flavoprotein subunit beta, mitochondrial (ETFB).